The primary structure comprises 559 residues: ADP,ATP carrier protein 1 (559 aa).

Polar residues predominate over residues 1-10; it reads MNEVENNNHS. Residues 1–22 are disordered; the sequence is MNEVENNNHSFPREDIPTEDEI. A glycan (N-linked (GlcNAc...) asparagine) is linked at N8. Helical transmembrane passes span 46 to 66, 79 to 99, 111 to 131, and 174 to 194; these read FALLGLMFGIIGFIYSFMRIL, TILFIKIFYILPVSMALVFLI, IFSIFCGGFASLFFLCGAVFL, and IVFISAEMWGSLVLSYLFLSF. The N-linked (GlcNAc...) asparagine glycan is linked to N196. 2 consecutive transmembrane segments (helical) span residues 210-230 and 242-262; these read PLIIITNVSLFLSATVAGAFF and QVLLSGIFIFQGFLVVLVIFL. N-linked (GlcNAc...) asparagine glycosylation is present at N290. 3 consecutive transmembrane segments (helical) span residues 305–325, 354–373, and 377–397; these read LLLAMSLIVLFFNISYNMVES, QYMTSVVVICLNLSPFSSYV, and GFLLVGLITPIVTLMAIVLFL. N-linked (GlcNAc...) asparagine glycosylation occurs at N403. Helical transmembrane passes span 425-447, 473-493, and 503-523; these read YVLENYFGVIFMSLLKITKYSAF, IFGKLGKSIGSIYGLLMFEAL, and PITAGIIFIFIVMWVKAIIYL.

Belongs to the ADP/ATP translocase tlc family.

It localises to the cell membrane. ATP transporter involved in the uptake of ATP from the host cell cytoplasm. Provides the microsporidian cell with host ATP in exchange for ADP. This is an obligate exchange system. This energy acquiring activity is an important component of microsporidian parasitism. In Encephalitozoon cuniculi (strain GB-M1) (Microsporidian parasite), this protein is ADP,ATP carrier protein 1 (NTT1).